A 635-amino-acid chain; its full sequence is Threonine--tRNA ligase (635 aa).

The TGS domain maps to 1–61 (MVSIRLPDGS…DRDASLAIVT (61 aa)). Residues 242-533 (DHRKLGKQLD…LIEHHAGAMP (292 aa)) are catalytic. Cys-333, His-384, and His-510 together coordinate Zn(2+).

The protein belongs to the class-II aminoacyl-tRNA synthetase family. In terms of assembly, homodimer. It depends on Zn(2+) as a cofactor.

Its subcellular location is the cytoplasm. It catalyses the reaction tRNA(Thr) + L-threonine + ATP = L-threonyl-tRNA(Thr) + AMP + diphosphate + H(+). In terms of biological role, catalyzes the attachment of threonine to tRNA(Thr) in a two-step reaction: L-threonine is first activated by ATP to form Thr-AMP and then transferred to the acceptor end of tRNA(Thr). Also edits incorrectly charged L-seryl-tRNA(Thr). The sequence is that of Threonine--tRNA ligase from Burkholderia pseudomallei (strain 1106a).